The sequence spans 388 residues: Succinate--CoA ligase [ADP-forming] subunit beta (388 aa).

The 236-residue stretch at 9 to 244 (KQLFAEYGLP…PSQEDSREAH (236 aa)) folds into the ATP-grasp domain. ATP is bound by residues lysine 46, 53–55 (GRG), glutamate 99, threonine 102, and glutamate 107. Mg(2+) is bound by residues asparagine 199 and aspartate 213. Substrate-binding positions include asparagine 264 and 321 to 323 (GIV).

It belongs to the succinate/malate CoA ligase beta subunit family. Heterotetramer of two alpha and two beta subunits. It depends on Mg(2+) as a cofactor.

It catalyses the reaction succinate + ATP + CoA = succinyl-CoA + ADP + phosphate. The enzyme catalyses GTP + succinate + CoA = succinyl-CoA + GDP + phosphate. The protein operates within carbohydrate metabolism; tricarboxylic acid cycle; succinate from succinyl-CoA (ligase route): step 1/1. In terms of biological role, succinyl-CoA synthetase functions in the citric acid cycle (TCA), coupling the hydrolysis of succinyl-CoA to the synthesis of either ATP or GTP and thus represents the only step of substrate-level phosphorylation in the TCA. The beta subunit provides nucleotide specificity of the enzyme and binds the substrate succinate, while the binding sites for coenzyme A and phosphate are found in the alpha subunit. This chain is Succinate--CoA ligase [ADP-forming] subunit beta, found in Pseudoalteromonas translucida (strain TAC 125).